The chain runs to 176 residues: Dual-action ribosomal maturation protein DarP (176 aa).

It belongs to the DarP family.

It localises to the cytoplasm. In terms of biological role, member of a network of 50S ribosomal subunit biogenesis factors which assembles along the 30S-50S interface, preventing incorrect 23S rRNA structures from forming. Promotes peptidyl transferase center (PTC) maturation. The protein is Dual-action ribosomal maturation protein DarP of Aliivibrio fischeri (strain MJ11) (Vibrio fischeri).